A 275-amino-acid polypeptide reads, in one-letter code: Autophagy protein 5 (275 aa).

M1 is modified (N-acetylmethionine). K130 is covalently cross-linked (Glycyl lysine isopeptide (Lys-Gly) (interchain with G-Cter in ATG12)).

This sequence belongs to the ATG5 family. Forms a conjugate with ATG12. Part of the minor complex composed of 4 sets of ATG12-ATG5 and ATG16L1 (400 kDa); this complex interacts with ATG3 leading to disruption of ATG7 interaction and promotion of ATG8-like proteins lipidation. Forms an 800-kDa complex composed of ATG12-ATG5 and ATG16L2. The ATG12-ATG5 conjugate interacts with RAB33A; this interaction is bridged by ATG16L1 and promotes ATG12-ATG5-ATG16L1 complex recruitment to phagophores. Interacts with TECPR1; the interaction is direct and does not take place when ATG16L1 is associated with the ATG5-ATG12 conjugate. Interacts with DHX58/RIG-1, IFIH1/MDA5 and MAVS/IPS-1 in monomeric form as well as in ATG12-ATG5 conjugate form. The interaction with MAVS is further enhanced upon vesicular stomatitis virus (VSV) infection. Interacts with ATG3. Interacts with ATG7 and ATG10. Interacts with FADD. Interacts with Bassoon/BSN; this interaction is important for the regulation of presynaptic autophagy. Interacts with ATG16L2. Conjugated to ATG12; which is essential for autophagy, but is not required for association with isolation membrane. In terms of processing, acetylated by EP300.

The protein localises to the cytoplasm. Its subcellular location is the preautophagosomal structure membrane. In terms of biological role, involved in autophagic vesicle formation. Conjugation with ATG12, through a ubiquitin-like conjugating system involving ATG7 as an E1-like activating enzyme and ATG10 as an E2-like conjugating enzyme, is essential for its function. The ATG12-ATG5 conjugate acts as an E3-like enzyme which is required for lipidation of ATG8 family proteins and their association to the vesicle membranes. Involved in mitochondrial quality control after oxidative damage, and in subsequent cellular longevity. Plays a critical role in multiple aspects of lymphocyte development and is essential for both B and T lymphocyte survival and proliferation. Required for optimal processing and presentation of antigens for MHC II. Involved in the maintenance of axon morphology and membrane structures, as well as in normal adipocyte differentiation. Promotes primary ciliogenesis through removal of OFD1 from centriolar satellites and degradation of IFT20 via the autophagic pathway. As part of the ATG8 conjugation system with ATG12 and ATG16L1, required for recruitment of LRRK2 to stressed lysosomes and induction of LRRK2 kinase activity in response to lysosomal stress. Functionally, may play an important role in the apoptotic process, possibly within the modified cytoskeleton. Its expression is a relatively late event in the apoptotic process, occurring downstream of caspase activity. Plays a crucial role in IFN-gamma-induced autophagic cell death by interacting with FADD. This is Autophagy protein 5 from Bos taurus (Bovine).